We begin with the raw amino-acid sequence, 92 residues long: MARSIKKGPFADDHLKKKVEAQSGSEKKQVIKTWSRRSTIFPDFIGHTFAVYDGRKHVPVFVTEDMVGHKLGEFAPTRTFKGHAADDKKTRR.

Residues 1-27 form a disordered region; it reads MARSIKKGPFADDHLKKKVEAQSGSEK. Over residues 9 to 27 the composition is skewed to basic and acidic residues; that stretch reads PFADDHLKKKVEAQSGSEK.

It belongs to the universal ribosomal protein uS19 family.

Functionally, protein S19 forms a complex with S13 that binds strongly to the 16S ribosomal RNA. In Staphylococcus saprophyticus subsp. saprophyticus (strain ATCC 15305 / DSM 20229 / NCIMB 8711 / NCTC 7292 / S-41), this protein is Small ribosomal subunit protein uS19.